A 402-amino-acid polypeptide reads, in one-letter code: Ferredoxin--NADP reductase (402 aa).

One can recognise a CpcD-like domain in the interval 18–74 (NRLFIYEVVGLGGDGRNENSLVRKSGTTFITVPYARMNQEMQRITKLGGKIVSIRPA). The tract at residues 80–101 (IVSEGQSSAQASAQSPMASSTK) is disordered. A compositionally biased stretch (low complexity) spans 85–99 (QSSAQASAQSPMASS). The FAD-binding FR-type domain occupies 120–245 (KTPFLGKCIE…TGPVGKEMLL (126 aa)). FAD contacts are provided by residues 179-182 (RLYS), 200-202 (CVR), Y206, 218-220 (VCS), and T260. NADP(+) is bound by residues S182 and R202. NADP(+)-binding positions include T260, 292 to 293 (VP), 322 to 323 (SR), K332, 332 to 336 (KVYVQ), 361 to 362 (GL), and E400.

Belongs to the ferredoxin--NADP reductase type 1 family. FAD is required as a cofactor.

Its subcellular location is the cellular thylakoid membrane. It carries out the reaction 2 reduced [2Fe-2S]-[ferredoxin] + NADP(+) + H(+) = 2 oxidized [2Fe-2S]-[ferredoxin] + NADPH. In Picosynechococcus sp. (strain ATCC 27264 / PCC 7002 / PR-6) (Agmenellum quadruplicatum), this protein is Ferredoxin--NADP reductase (petH).